The following is a 116-amino-acid chain: Large ribosomal subunit protein uL18 (116 aa).

The protein belongs to the universal ribosomal protein uL18 family. Part of the 50S ribosomal subunit; part of the 5S rRNA/L5/L18/L25 subcomplex. Contacts the 5S and 23S rRNAs.

This is one of the proteins that bind and probably mediate the attachment of the 5S RNA into the large ribosomal subunit, where it forms part of the central protuberance. This is Large ribosomal subunit protein uL18 from Acinetobacter baumannii (strain AB307-0294).